Consider the following 1190-residue polypeptide: Ras-specific guanine nucleotide-releasing factor 2 (1190 aa).

Residues 22 to 133 (EGTKRGFLSK…WMEAIHQASY (112 aa)) enclose the PH 1 domain. Residues 155-193 (ETEKIAANQLRHQLEDQDTEIERLKSEIVALNKTKERMR) are a coiled coil. Residues 205–234 (DIKKIKKVQSFMRGWLCRRKWKTIVQDYIC) form the IQ domain. The region spanning 243-429 (KRNQIVFTMV…EELSRVMHDE (187 aa)) is the DH domain. In terms of domain architecture, PH 2 spans 470–588 (PSVERGKLSK…WMSDISQCVD (119 aa)). The N-terminal Ras-GEF domain occupies 635 to 755 (KVPQIRYASV…LTSSLNSRIG (121 aa)). Residues 713–744 (VDGKSPRLCRKFSSPPPLAVSRTSSPVRARKL) form a disordered region. A phosphoserine mark is found at serine 725 and serine 726. Position 736 is a phosphoserine; by CDK5 (serine 736). Residues 743–751 (KLSLTSSLN) are regulates proteasomal degradation. 2 positions are modified to phosphoserine: serine 745 and serine 749. Residues 757–826 (LDLTTSSSSS…QPGGQVADST (70 aa)) are disordered. Residues 760–776 (TTSSSSSSPTTTVHSPA) show a composition bias toward low complexity. The span at 798 to 810 (TDMSPCRSPSTTP) shows a compositional bias: polar residues. A phosphoserine mark is found at serine 801, serine 805, and serine 925. Positions 955–1187 (SAMELAEQIT…YELSLKIEPR (233 aa)) constitute a Ras-GEF domain. The responsible of the affinity for farnesylated versus geranylgeranylated Ras stretch occupies residues 1052–1081 (ALNRSAIYRLKKTWTKVSKQTKALMDKLQK).

Homooligomer and heterooligomer with RASGRF1. Interacts with Ras and RAC1. Interacts in a calcium-dependent manner with calmodulin. Interacts with CDK5R1 and probably EPB49. Interacts with the AMPA receptor through GRIA1. Interacts with microtubules. Post-translationally, phosphorylated by CDK5; down-regulates RASGRF2-mediated RAC1 activation. Ubiquitinated upon interaction with Ras. Ubiquitination leads to degradation through the 26S proteasome. As to expression, widely expressed. Detected in brain, lung, spleen, pancreas, kidney, liver, heart, mammary gland and skeletal muscle.

The protein resides in the cytoplasm. Its subcellular location is the cell membrane. The protein localises to the endoplasmic reticulum membrane. Its function is as follows. Functions as a calcium-regulated nucleotide exchange factor activating both Ras and RAC1 through the exchange of bound GDP for GTP. Preferentially activates HRAS in vivo compared to RRAS based on their different types of prenylation. Functions in synaptic plasticity by contributing to the induction of long term potentiation. In Rattus norvegicus (Rat), this protein is Ras-specific guanine nucleotide-releasing factor 2 (Rasgrf2).